The sequence spans 621 residues: Phosphoenolpyruvate carboxykinase [GTP] (621 aa).

Residues R82 and 220–222 contribute to the substrate site; that span reads YGG. The Mn(2+) site is built by K229 and H249. Residue S271 coordinates substrate. 272 to 277 lines the GTP pocket; it reads QCGKTN. C273 is an active-site residue. D296 contributes to the Mn(2+) binding site. Residue 386–388 participates in substrate binding; the sequence is NSR. Residues R388, R419, and 514-517 contribute to the GTP site; that span reads FGEN.

Belongs to the phosphoenolpyruvate carboxykinase [GTP] family. As to quaternary structure, monomer. Requires Mn(2+) as cofactor.

The protein resides in the cytoplasm. The catalysed reaction is oxaloacetate + GTP = phosphoenolpyruvate + GDP + CO2. The protein operates within carbohydrate biosynthesis; gluconeogenesis. In terms of biological role, catalyzes the conversion of oxaloacetate (OAA) to phosphoenolpyruvate (PEP), the rate-limiting step in the metabolic pathway that produces glucose from lactate and other precursors derived from the citric acid cycle. The sequence is that of Phosphoenolpyruvate carboxykinase [GTP] from Corynebacterium kroppenstedtii (strain DSM 44385 / JCM 11950 / CIP 105744 / CCUG 35717).